A 143-amino-acid polypeptide reads, in one-letter code: Nucleoside diphosphate kinase (143 aa).

Positions 11, 59, 87, 93, 104, and 114 each coordinate ATP. The active-site Pros-phosphohistidine intermediate is the His117.

This sequence belongs to the NDK family. Homotetramer. Requires Mg(2+) as cofactor.

It is found in the cytoplasm. It carries out the reaction a 2'-deoxyribonucleoside 5'-diphosphate + ATP = a 2'-deoxyribonucleoside 5'-triphosphate + ADP. It catalyses the reaction a ribonucleoside 5'-diphosphate + ATP = a ribonucleoside 5'-triphosphate + ADP. Major role in the synthesis of nucleoside triphosphates other than ATP. The ATP gamma phosphate is transferred to the NDP beta phosphate via a ping-pong mechanism, using a phosphorylated active-site intermediate. The chain is Nucleoside diphosphate kinase from Stutzerimonas stutzeri (strain A1501) (Pseudomonas stutzeri).